We begin with the raw amino-acid sequence, 154 residues long: MutT-like protein (154 aa).

The Nudix hydrolase domain occupies 15-136 (PLHSVSVAGV…YAIRLLDALD (122 aa)). Mg(2+)-binding residues include Gly-48, Glu-63, Glu-66, and Glu-67. The short motif at 48–69 (GVLELDETPETGVAREVWEETG) is the Nudix box element.

Belongs to the Nudix hydrolase family.

The sequence is that of MutT-like protein from Streptomyces ambofaciens.